A 177-amino-acid polypeptide reads, in one-letter code: GTP-dependent dephospho-CoA kinase (177 aa).

5 residues coordinate GTP: D45, V46, V47, D64, and E120.

This sequence belongs to the GTP-dependent DPCK family.

The enzyme catalyses 3'-dephospho-CoA + GTP = GDP + CoA + H(+). It functions in the pathway cofactor biosynthesis; coenzyme A biosynthesis. Its function is as follows. Catalyzes the GTP-dependent phosphorylation of the 3'-hydroxyl group of dephosphocoenzyme A to form coenzyme A (CoA). The sequence is that of GTP-dependent dephospho-CoA kinase from Halobacterium salinarum (strain ATCC 29341 / DSM 671 / R1).